Reading from the N-terminus, the 285-residue chain is MKVDVGPDPSLVYRPDVDPEMAKSKDSFRNYTSGPLLDRVFTTYKLMHTHQTVDFVSRKRIQYGSFSYKKMTIMEAVGMLDDLVDESDPDVDFPNSFHAFQTAEGIRKAHPDKDWFHLVGLLHDLGKIMALWGEPQWAVVGDTFPVGCRPQASVVFCDSTFQDNPDLQDPRYSTELGMYQPHCGLENVLMSWGHDEYLYQMMKFNKFSLPSEAFYMIRFHSFYPWHTGGDYRQLCSQQDLDMLPWVQEFNKFDLYTKCPDLPDVESLRPYYQGLIDKYCPGTLSW.

Residue arginine 29 participates in substrate binding. Serine 33 bears the Phosphoserine mark. A substrate-binding site is contributed by 85–88; that stretch reads DESD. Fe cation contacts are provided by histidine 98, histidine 123, and aspartate 124. Residues lysine 127 and 141–142 each bind substrate; that span reads GD. Fe cation is bound by residues histidine 194, histidine 220, and aspartate 253. 220-221 provides a ligand contact to substrate; sequence HS.

Belongs to the myo-inositol oxygenase family. The cofactor is Fe cation. In terms of tissue distribution, kidney specific. Renal proximal tubules.

The protein resides in the cytoplasm. The enzyme catalyses myo-inositol + O2 = D-glucuronate + H2O + H(+). Its pathway is polyol metabolism; myo-inositol degradation into D-glucuronate; D-glucuronate from myo-inositol: step 1/1. This chain is Inositol oxygenase (Miox), found in Mus musculus (Mouse).